The following is a 417-amino-acid chain: SNF1 protein kinase subunit beta-3 (417 aa).

The segment covering 1–12 has biased composition (basic and acidic residues); that stretch reads MAGDNPENKDAS. Residues 1 to 37 form a disordered region; the sequence is MAGDNPENKDASMLDVSDAASNTTINGKHSADSTNEA. Phosphoserine is present on residues Ser-12, Ser-21, Ser-44, and Ser-135. The segment covering 19–37 has biased composition (polar residues); sequence AASNTTINGKHSADSTNEA. Disordered stretches follow at residues 64–155 and 250–269; these read SSLI…VEGK and GNEP…DDSK. Over residues 118 to 136 the composition is skewed to polar residues; the sequence is TGNTLQKMDYQPSQQPDSL. A compositionally biased stretch (low complexity) spans 137–149; it reads QNQGFQQQQEQQQ. The kinase-interacting sequence (KIS); required for interaction with SNF1 stretch occupies residues 152 to 342; it reads VEGKKGRAMM…DQQQNNHQNM (191 aa). Residues 257–269 show a composition bias toward basic and acidic residues; sequence LAEKKANHVDDSK. A phosphoserine mark is found at Ser-276 and Ser-279. Residues 343–417 form an association with SNF1 kinase complex (ASC) domain; required for interaction with SNF4 region; the sequence is AWLTPPQLPP…VTQILYTPLQ (75 aa).

This sequence belongs to the 5'-AMP-activated protein kinase beta subunit family. Component of the SNF1 kinase complex, a heterotrimeric complex composed of the catalytic alpha subunit SNF1, one of the three related beta subunits SIP1, SIP2 or GAL83, and the regulatory gamma subunit SNF4. The beta subunit serves as a bridge between the catalytic and the regulatory subunit. Interacts (via KIS domain) with SNF1. Interacts (via ASC domain) with SNF4. Interacts with REE1. In terms of processing, phosphorylated by SNF1 in vitro.

It is found in the cytoplasm. The protein localises to the nucleus. Beta subunit of the SNF1 kinase complex, which is required for transcriptional, metabolic, and developmental adaptations in response to glucose limitation. Has a structural role, mediating heterotrimer formation, and a regulatory role, defining carbon source-regulated subcellular location and substrate specificity of the SNF1 kinase complex. Promotes the relocalization of the SNF1 kinase complex to the nucleus upon shift to nonfermentable carbon sources. This Saccharomyces cerevisiae (strain ATCC 204508 / S288c) (Baker's yeast) protein is SNF1 protein kinase subunit beta-3 (GAL83).